A 147-amino-acid chain; its full sequence is uncharacterized protein (147 aa).

Helical transmembrane passes span 4-26 (YLRV…FFWG) and 123-145 (YALC…RAYF).

The protein localises to the cell membrane. This is an uncharacterized protein from Treponema pallidum (strain Nichols).